Reading from the N-terminus, the 273-residue chain is Phosphatidylglycerol--prolipoprotein diacylglyceryl transferase (273 aa).

The next 7 helical transmembrane spans lie at 21 to 41, 60 to 80, 95 to 115, 124 to 144, 176 to 196, 203 to 223, and 236 to 256; these read ISVR…LWLA, LLFA…VLFY, VWTG…AMLW, FFGV…MGRM, SQLY…NWFI, GSVS…VEYV, and FISM…LMMV. Arg-143 is a binding site for a 1,2-diacyl-sn-glycero-3-phospho-(1'-sn-glycerol).

Belongs to the Lgt family.

The protein resides in the cell inner membrane. It catalyses the reaction L-cysteinyl-[prolipoprotein] + a 1,2-diacyl-sn-glycero-3-phospho-(1'-sn-glycerol) = an S-1,2-diacyl-sn-glyceryl-L-cysteinyl-[prolipoprotein] + sn-glycerol 1-phosphate + H(+). Its pathway is protein modification; lipoprotein biosynthesis (diacylglyceryl transfer). Catalyzes the transfer of the diacylglyceryl group from phosphatidylglycerol to the sulfhydryl group of the N-terminal cysteine of a prolipoprotein, the first step in the formation of mature lipoproteins. The protein is Phosphatidylglycerol--prolipoprotein diacylglyceryl transferase of Vibrio atlanticus (strain LGP32) (Vibrio splendidus (strain Mel32)).